Here is a 1009-residue protein sequence, read N- to C-terminus: Dihydropyrimidine dehydrogenase [NADP(+)] (1009 aa).

The 4Fe-4S ferredoxin-type 1 domain occupies 69–99 (RGALFESARCLKCADAPCQKGCPTQLDIKSF). [4Fe-4S] cluster is bound by residues Cys-78, Cys-81, Cys-86, and Cys-90. Residue Val-128 coordinates FAD. [4Fe-4S] cluster contacts are provided by Cys-129, Cys-135, Cys-139, and Gln-155. FAD contacts are provided by residues 193–197 (GCGPT), 217–225 (EKEQYLGGL), Arg-234, and Leu-260. NADP(+)-binding positions include 339–342 (AGDT), 363–364 (RR), Arg-370, 436–438 (AFG), and 479–484 (DLVGNG). FAD is bound at residue 478-486 (GDLVGNGTT). FMN is bound by residues Ser-548 and 572–573 (KT). Substrate contacts are provided by residues Asn-607 and 666–668 (NLS). Cys-669 serves as the catalytic Proton acceptor. Lys-707 serves as a coordination point for FMN. 734–735 (NT) lines the substrate pocket. FMN-binding positions include Gly-765, 791-793 (TGG), and 814-815 (CS). 4Fe-4S ferredoxin-type domains lie at 932–964 (VVAL…FDGK) and 965–995 (THIP…MVPR). Cys-941, Cys-944, Cys-947, Cys-951, Cys-974, Cys-977, Cys-980, and Cys-984 together coordinate [4Fe-4S] cluster.

It belongs to the dihydropyrimidine dehydrogenase family. As to quaternary structure, homodimer. Requires [4Fe-4S] cluster as cofactor. The cofactor is FAD. FMN serves as cofactor.

Its subcellular location is the cytoplasm. The catalysed reaction is 5,6-dihydrouracil + NADP(+) = uracil + NADPH + H(+). Its pathway is amino-acid biosynthesis; beta-alanine biosynthesis. Involved in pyrimidine base degradation. Catalyzes the reduction of uracil and thymine. This Dictyostelium discoideum (Social amoeba) protein is Dihydropyrimidine dehydrogenase [NADP(+)] (pyd1).